The following is a 260-amino-acid chain: Arginine esterase (260 aa).

The N-terminal stretch at 1–17 (MWFLALCLAMSLGWTGA) is a signal peptide. A propeptide spans 18-24 (EPHFQPR) (activation peptide). The Peptidase S1 domain occupies 25–257 (IIGGRECLKN…HLMWIKDTMK (233 aa)). Disulfide bonds link Cys-31–Cys-172, Cys-50–Cys-66, Cys-151–Cys-218, Cys-183–Cys-197, and Cys-208–Cys-233. The active-site Charge relay system is the His-65. Asn-79 carries an N-linked (GlcNAc...) asparagine glycan. Residue Asp-119 is the Charge relay system of the active site. Ser-212 (charge relay system) is an active-site residue.

This sequence belongs to the peptidase S1 family. Kallikrein subfamily.

The enzyme catalyses Preferential cleavage of Arg-|-Xaa bonds in small molecule substrates. Highly selective action to release kallidin (lysyl-bradykinin) from kininogen involves hydrolysis of Met-|-Xaa or Leu-|-Xaa.. In terms of biological role, this serine protease is found in dog seminal plasma, its exact physiological function is not known. This is Arginine esterase from Canis lupus familiaris (Dog).